The following is a 262-amino-acid chain: Thiazole synthase (262 aa).

The active-site Schiff-base intermediate with DXP is Lys96. Residues Gly157, 184-185 (AG), and 206-207 (NT) contribute to the 1-deoxy-D-xylulose 5-phosphate site.

The protein belongs to the ThiG family. In terms of assembly, homotetramer. Forms heterodimers with either ThiH or ThiS.

The protein localises to the cytoplasm. It carries out the reaction [ThiS sulfur-carrier protein]-C-terminal-Gly-aminoethanethioate + 2-iminoacetate + 1-deoxy-D-xylulose 5-phosphate = [ThiS sulfur-carrier protein]-C-terminal Gly-Gly + 2-[(2R,5Z)-2-carboxy-4-methylthiazol-5(2H)-ylidene]ethyl phosphate + 2 H2O + H(+). Its pathway is cofactor biosynthesis; thiamine diphosphate biosynthesis. Functionally, catalyzes the rearrangement of 1-deoxy-D-xylulose 5-phosphate (DXP) to produce the thiazole phosphate moiety of thiamine. Sulfur is provided by the thiocarboxylate moiety of the carrier protein ThiS. In vitro, sulfur can be provided by H(2)S. The chain is Thiazole synthase from Legionella pneumophila (strain Corby).